We begin with the raw amino-acid sequence, 357 residues long: Geranylgeranyl pyrophosphate synthase, chloroplastic (357 aa).

The transit peptide at 1-40 directs the protein to the chloroplast; it reads MRSNLCHPLKNQLPISFFLSGTIRKPIFSCSRLSISAIIT. Isopentenyl diphosphate contacts are provided by lysine 106, arginine 109, and histidine 138. Aspartate 145 and aspartate 151 together coordinate Mg(2+). Residue arginine 156 participates in dimethylallyl diphosphate binding. Arginine 157 contacts isopentenyl diphosphate. Dimethylallyl diphosphate is bound by residues lysine 242, threonine 243, glutamine 280, lysine 297, and lysine 307.

It belongs to the FPP/GGPP synthase family. The cofactor is Mg(2+).

It localises to the plastid. The protein resides in the chloroplast. It catalyses the reaction isopentenyl diphosphate + dimethylallyl diphosphate = (2E)-geranyl diphosphate + diphosphate. It carries out the reaction isopentenyl diphosphate + (2E)-geranyl diphosphate = (2E,6E)-farnesyl diphosphate + diphosphate. The catalysed reaction is isopentenyl diphosphate + (2E,6E)-farnesyl diphosphate = (2E,6E,10E)-geranylgeranyl diphosphate + diphosphate. Its pathway is isoprenoid biosynthesis; farnesyl diphosphate biosynthesis; farnesyl diphosphate from geranyl diphosphate and isopentenyl diphosphate: step 1/1. It participates in isoprenoid biosynthesis; geranyl diphosphate biosynthesis; geranyl diphosphate from dimethylallyl diphosphate and isopentenyl diphosphate: step 1/1. It functions in the pathway isoprenoid biosynthesis; geranylgeranyl diphosphate biosynthesis; geranylgeranyl diphosphate from farnesyl diphosphate and isopentenyl diphosphate: step 1/1. Functionally, catalyzes the trans-addition of the three molecules of IPP onto DMAPP to form geranylgeranyl pyrophosphate. This is Geranylgeranyl pyrophosphate synthase, chloroplastic (GGPS1) from Catharanthus roseus (Madagascar periwinkle).